Reading from the N-terminus, the 155-residue chain is Troponin C, isoform 3 (155 aa).

EF-hand domains are found at residues 11–46, 47–82, 87–122, and 123–155; these read EQIAVLQKAFNSFDHQKTGSIPTEMVADILRLMGQP, FDKKILEELIEEVDEDKSGRLEFGEFVQLAAKFIVE, AMQKELREAFRLYDKQGNGFIPTTCLKEILKELDDQ, and LTEQELDIMIEEIDSDGSGTVDFDEFMEMMTGE. Aspartate 60, aspartate 62, serine 64, arginine 66, and glutamate 71 together coordinate Ca(2+). Aspartate 136, aspartate 138, serine 140, threonine 142, and glutamate 147 together coordinate Ca(2+).

Belongs to the troponin C family. In terms of tissue distribution, present in both larval and adult muscles.

The sequence is that of Troponin C, isoform 3 (TpnC73F) from Drosophila melanogaster (Fruit fly).